Here is an 83-residue protein sequence, read N- to C-terminus: Apolipoprotein C-I (83 aa).

The signal sequence occupies residues 1–26; it reads MRLILSLPVLAVVLAMVLEGPAPAQA.

It belongs to the apolipoprotein C1 family.

Its subcellular location is the secreted. Its function is as follows. Inhibitor of lipoprotein binding to the low density lipoprotein (LDL) receptor, LDL receptor-related protein, and very low density lipoprotein (VLDL) receptor. Associates with high density lipoproteins (HDL) and the triacylglycerol-rich lipoproteins in the plasma and makes up about 10% of the protein of the VLDL and 2% of that of HDL. Appears to interfere directly with fatty acid uptake and is also the major plasma inhibitor of cholesteryl ester transfer protein (CETP). Binds free fatty acids and reduces their intracellular esterification. Modulates the interaction of APOE with beta-migrating VLDL and inhibits binding of beta-VLDL to the LDL receptor-related protein. The polypeptide is Apolipoprotein C-I (APOC1) (Rousettus aegyptiacus (Egyptian fruit bat)).